Consider the following 504-residue polypeptide: ATP synthase subunit alpha (504 aa).

169-176 contributes to the ATP binding site; the sequence is GDRQIGKT.

Belongs to the ATPase alpha/beta chains family. As to quaternary structure, F-type ATPases have 2 components, CF(1) - the catalytic core - and CF(0) - the membrane proton channel. CF(1) has five subunits: alpha(3), beta(3), gamma(1), delta(1), epsilon(1). CF(0) has three main subunits: a(1), b(2) and c(9-12). The alpha and beta chains form an alternating ring which encloses part of the gamma chain. CF(1) is attached to CF(0) by a central stalk formed by the gamma and epsilon chains, while a peripheral stalk is formed by the delta and b chains.

The protein resides in the cell membrane. It carries out the reaction ATP + H2O + 4 H(+)(in) = ADP + phosphate + 5 H(+)(out). Functionally, produces ATP from ADP in the presence of a proton gradient across the membrane. The alpha chain is a regulatory subunit. This Syntrophomonas wolfei subsp. wolfei (strain DSM 2245B / Goettingen) protein is ATP synthase subunit alpha.